We begin with the raw amino-acid sequence, 233 residues long: Ribosomal RNA small subunit methyltransferase G (233 aa).

Residues Gly-91, Met-96, 142–143 (VE), and Arg-157 contribute to the S-adenosyl-L-methionine site.

Belongs to the methyltransferase superfamily. RNA methyltransferase RsmG family.

It localises to the cytoplasm. The enzyme catalyses guanosine(527) in 16S rRNA + S-adenosyl-L-methionine = N(7)-methylguanosine(527) in 16S rRNA + S-adenosyl-L-homocysteine. Functionally, specifically methylates the N7 position of guanine in position 527 of 16S rRNA. This is Ribosomal RNA small subunit methyltransferase G from Cupriavidus necator (strain ATCC 17699 / DSM 428 / KCTC 22496 / NCIMB 10442 / H16 / Stanier 337) (Ralstonia eutropha).